The sequence spans 120 residues: Large ribosomal subunit protein bL12 (120 aa).

The protein belongs to the bacterial ribosomal protein bL12 family. In terms of assembly, homodimer. Part of the ribosomal stalk of the 50S ribosomal subunit. Forms a multimeric L10(L12)X complex, where L10 forms an elongated spine to which 2 to 4 L12 dimers bind in a sequential fashion. Binds GTP-bound translation factors.

Functionally, forms part of the ribosomal stalk which helps the ribosome interact with GTP-bound translation factors. Is thus essential for accurate translation. This Brevibacillus brevis (strain 47 / JCM 6285 / NBRC 100599) protein is Large ribosomal subunit protein bL12.